The sequence spans 1220 residues: MGDMANNSVAYSGVKNSLKEANHDGDFGITLAELRALMELRSTDALRKIQESYGDVYGICTKLKTSPNEGLSGNPADLERREAVFGKNFIPPKKPKTFLQLVWEALQDVTLIILEIAAIVSLGLSFYQPPEGDNALCGEVSVGEEEGEGETGWIEGAAILLSVVCVVLVTAFNDWSKEKQFRGLQSRIEQEQKFTVIRGGQVIQIPVADITVGDIAQVKYGDLLPADGILIQGNDLKIDESSLTGESDHVKKSLDKDPLLLSGTHVMEGSGRMVVTAVGVNSQTGIIFTLLGAGGEEEEKKDEKKKEKKNKKQDGAIENRNKAKAQDGAAMEMQPLKSEEGGDGDEKDKKKANLPKKEKSVLQGKLTKLAVQIGKAGLLMSAITVIILVLYFVIDTFWVQKRPWLAECTPIYIQYFVKFFIIGVTVLVVAVPEGLPLAVTISLAYSVKKMMKDNNLVRHLDACETMGNATAICSDKTGTLTMNRMTVVQAYINEKHYKKVPEPEAIPPNILSYLVTGISVNCAYTSKILPPEKEGGLPRHVGNKTECALLGLLLDLKRDYQDVRNEIPEEALYKVYTFNSVRKSMSTVLKNSDGSYRIFSKGASEIILKKCFKILSANGEAKVFRPRDRDDIVKTVIEPMASEGLRTICLAFRDFPAGEPEPEWDNENDIVTGLTCIAVVGIEDPVRPEVPDAIKKCQRAGITVRMVTGDNINTARAIATKCGILHPGEDFLCLEGKDFNRRIRNEKGEIEQERIDKIWPKLRVLARSSPTDKHTLVKGIIDSTVSDQRQVVAVTGDGTNDGPALKKADVGFAMGIAGTDVAKEASDIILTDDNFTSIVKAVMWGRNVYDSISKFLQFQLTVNVVAVIVAFTGACITQDSPLKAVQMLWVNLIMDTLASLALATEPPTESLLLRKPYGRNKPLISRTMMKNILGHAFYQLVVVFTLLFAGEKFFDIDSGRNAPLHAPPSEHYTIVFNTFVLMQLFNEINARKIHGERNVFEGIFNNAIFCTIVLGTFVVQIIIVQFGGKPFSCSELSIEQWLWSIFLGMGTLLWGQLISTIPTSRLKFLKEAGHGTQKEEIPEEELAEDVEEIDHAERELRRGQILWFRGLNRIQTQIRVVNAFRSSLYEGLEKPESRSSIHNFMTHPEFRIEDSEPHIPLIDDTDAEDDAPTKRNSSPPPSPNKNNNAVDSGIHLTIEMNKSATSSSPGSPLHSLETSL.

N-acetylglycine is present on G2. The Cytoplasmic segment spans residues 2–105 (GDMANNSVAY…KTFLQLVWEA (104 aa)). Phosphoserine is present on residues S8 and S17. The chain crosses the membrane as a helical span at residues 106 to 126 (LQDVTLIILEIAAIVSLGLSF). Residues 127–154 (YQPPEGDNALCGEVSVGEEEGEGETGWI) lie on the Extracellular side of the membrane. The helical transmembrane segment at 155–175 (EGAAILLSVVCVVLVTAFNDW) threads the bilayer. Over 176 to 366 (SKEKQFRGLQ…KEKSVLQGKL (191 aa)) the chain is Cytoplasmic. The segment at 297–356 (EEEKKDEKKKEKKNKKQDGAIENRNKAKAQDGAAMEMQPLKSEEGGDGDEKDKKKANLPK) is disordered. Basic and acidic residues-rich tracts occupy residues 312–325 (KQDGAIENRNKAKA) and 337–356 (KSEEGGDGDEKDKKKANLPK). S338 bears the Phosphoserine mark. The chain crosses the membrane as a helical span at residues 367 to 386 (TKLAVQIGKAGLLMSAITVI). Residues 387–418 (ILVLYFVIDTFWVQKRPWLAECTPIYIQYFVK) are Extracellular-facing. Residues 419-439 (FFIIGVTVLVVAVPEGLPLAV) form a helical membrane-spanning segment. Residues 440 to 855 (TISLAYSVKK…RNVYDSISKF (416 aa)) are Cytoplasmic-facing. The active-site 4-aspartylphosphate intermediate is D475. Mg(2+) is bound by residues D475, T477, and D797. Residues 856–876 (LQFQLTVNVVAVIVAFTGACI) form a helical membrane-spanning segment. Residues 877–882 (TQDSPL) lie on the Extracellular side of the membrane. A helical membrane pass occupies residues 883–903 (KAVQMLWVNLIMDTLASLALA). Over 904–927 (TEPPTESLLLRKPYGRNKPLISRT) the chain is Cytoplasmic. Residues 928-948 (MMKNILGHAFYQLVVVFTLLF) traverse the membrane as a helical segment. The Extracellular segment spans residues 949–971 (AGEKFFDIDSGRNAPLHAPPSEH). Residues 972–991 (YTIVFNTFVLMQLFNEINAR) form a helical membrane-spanning segment. Topologically, residues 992-1005 (KIHGERNVFEGIFN) are cytoplasmic. A helical membrane pass occupies residues 1006–1027 (NAIFCTIVLGTFVVQIIIVQFG). Topologically, residues 1028–1039 (GKPFSCSELSIE) are extracellular. The helical transmembrane segment at 1040–1060 (QWLWSIFLGMGTLLWGQLIST) threads the bilayer. Residues 1061-1220 (IPTSRLKFLK…SPLHSLETSL (160 aa)) lie on the Cytoplasmic side of the membrane. The segment at 1100–1117 (LRRGQILWFRGLNRIQTQ) is calmodulin-binding subdomain A. T1116 is modified (phosphothreonine; by PKC). Residues 1118 to 1220 (IRVVNAFRSS…SPLHSLETSL (103 aa)) form a required for basolateral membrane targeting region. Phosphoserine is present on residues S1140 and S1155. A disordered region spans residues 1160–1220 (PLIDDTDAED…SPLHSLETSL (61 aa)). Phosphothreonine is present on T1165. S1178 carries the post-translational modification Phosphoserine; by PKA. S1182 carries the phosphoserine modification. Positions 1200–1220 (MNKSATSSSPGSPLHSLETSL) are enriched in polar residues.

Belongs to the cation transport ATPase (P-type) (TC 3.A.3) family. Type IIB subfamily. Monomer. Dimer. Oligomer. Calmodulin binding. Interacts with PDZD11. Interacts with SLC35G1 and STIM1; inhibits calcium-transporting ATPase activity after store depletion. Interacts with YWHAE; interacts with the monomeric and dimeric forms of the YWHAE but prefer the monomer form; this interaction inhibits calcium-transporting ATPase activity. Interacts with NPTN; this interaction stabilizes ATP2B1 and increases ATPase activity; this interaction controls T cell calcium homeostasis following T cell activation. Interacts with EPB41; regulates small intestinal calcium absorption through regulation of membrane expression of ATP2B1. As to expression, isoform B: Ubiquitously expressed. Isoform C: Found in brain cortex, skeletal muscle and heart muscle. Isoform D: Has only been found in fetal skeletal muscle. Isoform K: Found in small intestine and liver. Abundantly expressed in the endometrial epithelial cells and glandular epithelial cells in early-proliferative phase and early-secretory phases.

Its subcellular location is the cell membrane. It is found in the basolateral cell membrane. The protein resides in the synapse. It localises to the presynaptic cell membrane. The protein localises to the cytoplasmic vesicle. Its subcellular location is the secretory vesicle. It is found in the synaptic vesicle membrane. The enzyme catalyses Ca(2+)(in) + ATP + H2O = Ca(2+)(out) + ADP + phosphate + H(+). Its function is as follows. Catalyzes the hydrolysis of ATP coupled with the transport of calcium from the cytoplasm to the extracellular space thereby maintaining intracellular calcium homeostasis. Plays a role in blood pressure regulation through regulation of intracellular calcium concentration and nitric oxide production leading to regulation of vascular smooth muscle cells vasoconstriction. Positively regulates bone mineralization through absorption of calcium from the intestine. Plays dual roles in osteoclast differentiation and survival by regulating RANKL-induced calcium oscillations in preosteoclasts and mediating calcium extrusion in mature osteoclasts. Regulates insulin sensitivity through calcium/calmodulin signaling pathway by regulating AKT1 activation and NOS3 activation in endothelial cells. May play a role in synaptic transmission by modulating calcium and proton dynamics at the synaptic vesicles. The chain is Plasma membrane calcium-transporting ATPase 1 from Homo sapiens (Human).